The following is a 185-amino-acid chain: Large ribosomal subunit protein bL25 (185 aa).

Belongs to the bacterial ribosomal protein bL25 family. CTC subfamily. As to quaternary structure, part of the 50S ribosomal subunit; part of the 5S rRNA/L5/L18/L25 subcomplex. Contacts the 5S rRNA. Binds to the 5S rRNA independently of L5 and L18.

Its function is as follows. This is one of the proteins that binds to the 5S RNA in the ribosome where it forms part of the central protuberance. The protein is Large ribosomal subunit protein bL25 of Chlamydia caviae (strain ATCC VR-813 / DSM 19441 / 03DC25 / GPIC) (Chlamydophila caviae).